The sequence spans 451 residues: mRNA cleavage and polyadenylation factor CLP1 (451 aa).

ATP contacts are provided by residues K75 and 136 to 141 (NTGKTA).

The protein belongs to the Clp1 family. Clp1 subfamily. As to quaternary structure, component of a pre-mRNA cleavage factor complex. Interacts directly with PCF11.

Its subcellular location is the nucleus. Its function is as follows. Required for endonucleolytic cleavage during polyadenylation-dependent pre-mRNA 3'-end formation. The chain is mRNA cleavage and polyadenylation factor CLP1 from Candida glabrata (strain ATCC 2001 / BCRC 20586 / JCM 3761 / NBRC 0622 / NRRL Y-65 / CBS 138) (Yeast).